Here is a 521-residue protein sequence, read N- to C-terminus: Protein translocase subunit SecD (521 aa).

6 helical membrane passes run 8 to 28 (LKLASVLGVCLLGLLLCLPNG), 359 to 379 (AGILSLGVGFLLVVVFMVLFY), 388 to 408 (IALLANLVLMVAILSLFEATL), 410 to 430 (LPGMAGMLLTLGMAVDANILI), 459 to 479 (IVDSNATAFLAHVMLFVFGTG), and 483 to 503 (GFALTITIGIATTLFTTLLLS).

The protein belongs to the SecD/SecF family. SecD subfamily. In terms of assembly, forms a complex with SecF. Part of the essential Sec protein translocation apparatus which comprises SecA, SecYEG and auxiliary proteins SecDF-YajC and YidC.

It localises to the cell inner membrane. Part of the Sec protein translocase complex. Interacts with the SecYEG preprotein conducting channel. SecDF uses the proton motive force (PMF) to complete protein translocation after the ATP-dependent function of SecA. The chain is Protein translocase subunit SecD from Acetobacter pasteurianus (strain NBRC 105184 / IFO 3283-01).